A 655-amino-acid polypeptide reads, in one-letter code: p-hydroxybenzoic acid efflux pump subunit AaeB (655 aa).

Topologically, residues Met-1–Arg-12 are periplasmic. Residues Phe-13–Leu-33 traverse the membrane as a helical segment. Residues Glu-34–Arg-37 lie on the Cytoplasmic side of the membrane. The chain crosses the membrane as a helical span at residues Trp-38–Pro-58. Over Tyr-59–Met-68 the chain is Periplasmic. Residues Leu-69–Ile-89 traverse the membrane as a helical segment. The Cytoplasmic portion of the chain corresponds to Arg-90–Pro-92. A helical membrane pass occupies residues Leu-93–Val-113. Residues Arg-114 to Ala-120 are Periplasmic-facing. Residues Trp-121 to Leu-141 traverse the membrane as a helical segment. Topologically, residues Thr-142–Ser-151 are cytoplasmic. Residues Glu-152–Ile-172 traverse the membrane as a helical segment. Over Lys-173–Thr-369 the chain is Periplasmic. A helical transmembrane segment spans residues Leu-370–Val-390. The Cytoplasmic portion of the chain corresponds to Thr-391–Asp-406. The chain crosses the membrane as a helical span at residues Phe-407–Pro-427. Residues Asn-428–Gln-430 are Periplasmic-facing. A helical membrane pass occupies residues Gln-431–Val-451. The Cytoplasmic portion of the chain corresponds to Gln-452–Met-459. The chain crosses the membrane as a helical span at residues Gly-460 to Ile-480. Residue Gln-481 is a topological domain, periplasmic. A helical transmembrane segment spans residues Phe-482 to Leu-502. Residues Val-503–Ser-655 are Cytoplasmic-facing.

This sequence belongs to the aromatic acid exporter ArAE (TC 2.A.85) family.

Its subcellular location is the cell inner membrane. Functionally, forms an efflux pump with AaeA. Could function as a metabolic relief valve, allowing to eliminate certain compounds when they accumulate to high levels in the cell. The chain is p-hydroxybenzoic acid efflux pump subunit AaeB from Salmonella typhi.